A 208-amino-acid polypeptide reads, in one-letter code: MLNSRSELLDQFLRQQGIRNEAILAAIRELPRERFIPEALSHQAYQNNALPIGEGQTISQPYIVAKMTELLELTPTSNVLEVGTGSGYQTAVLAKLVEHVNSIERIKSLQWNAKRLLKQLDIYNVSTKHGDGWKGWESKGPFDAIIVTAAAESIPNDLLFQLKDNGHLVIPVGEESQQLLRIIRQGEEFFSEVIEEVRFVPLVAGELA.

Residue S59 is part of the active site.

It belongs to the methyltransferase superfamily. L-isoaspartyl/D-aspartyl protein methyltransferase family.

The protein resides in the cytoplasm. It catalyses the reaction [protein]-L-isoaspartate + S-adenosyl-L-methionine = [protein]-L-isoaspartate alpha-methyl ester + S-adenosyl-L-homocysteine. Its function is as follows. Catalyzes the methyl esterification of L-isoaspartyl residues in peptides and proteins that result from spontaneous decomposition of normal L-aspartyl and L-asparaginyl residues. It plays a role in the repair and/or degradation of damaged proteins. The chain is Protein-L-isoaspartate O-methyltransferase from Aliivibrio fischeri (strain MJ11) (Vibrio fischeri).